Reading from the N-terminus, the 448-residue chain is Tryptophan dimethylallyltransferase 2 (448 aa).

L-tryptophan contacts are provided by residues 80-81 (IL) and glutamate 89. Arginine 100, lysine 186, and tyrosine 188 together coordinate substrate. The L-tryptophan site is built by tyrosine 190 and arginine 249. Substrate contacts are provided by arginine 262, lysine 264, tyrosine 266, glutamine 348, tyrosine 350, tyrosine 414, and tyrosine 418.

Belongs to the tryptophan dimethylallyltransferase family. In terms of assembly, homodimer.

The enzyme catalyses L-tryptophan + dimethylallyl diphosphate = 4-(3-methylbut-2-enyl)-L-tryptophan + diphosphate. It participates in alkaloid biosynthesis; ergot alkaloid biosynthesis. Its function is as follows. Catalyzes the first step of ergot alkaloid biosynthesis. Ergot alkaloids, which are produced by endophyte fungi, can enhance plant host fitness, but also cause livestock toxicosis to host plants. In Claviceps purpurea (strain 20.1) (Ergot fungus), this protein is Tryptophan dimethylallyltransferase 2 (dmaW2).